Reading from the N-terminus, the 221-residue chain is Queuosine precursor transporter (221 aa).

Residues 1–12 lie on the Cytoplasmic side of the membrane; the sequence is MNVFSQTQRYKA. The helical transmembrane segment at 13 to 33 threads the bilayer; the sequence is LFWLSLFHLLVITSSNYLVQL. A topological domain (periplasmic) is located at residue Pro-34. The helical transmembrane segment at 35 to 55 threads the bilayer; it reads VSILGFHTTWGAFSFPFIFLA. The Cytoplasmic segment spans residues 56–70; it reads TDLTVRIFGAPLARR. The helical transmembrane segment at 71–91 threads the bilayer; it reads IIFAVMIPALLISYVISSLFY. Over 92–97 the chain is Periplasmic; sequence MGSWQG. The chain crosses the membrane as a helical span at residues 98 to 118; it reads FGALAHFNLFVARIATASFMA. At 119–143 the chain is on the cytoplasmic side; the sequence is YALGQILDVHVFNRLRQSRRWWLAP. The helical transmembrane segment at 144 to 164 threads the bilayer; sequence TASTLFGNVSDTLAFFFIAFW. Over 165-184 the chain is Periplasmic; that stretch reads RSPDAFMAEHWMEIALVDYC. The helical transmembrane segment at 185 to 205 threads the bilayer; that stretch reads FKVLISIVFFLPMYGVLLNML. The Cytoplasmic portion of the chain corresponds to 206–221; it reads LKRLADKSEINALQAS.

The protein belongs to the vitamin uptake transporter (VUT/ECF) (TC 2.A.88) family. Q precursor transporter subfamily.

It localises to the cell inner membrane. In terms of biological role, involved in the import of queuosine (Q) precursors, required for Q precursor salvage. Transports 7-cyano-7-deazaguanine (preQ(0)) and 7-aminomethyl-7-deazaguanine (preQ(1)), with a preference for preQ(0). The sequence is that of Queuosine precursor transporter (yhhQ) from Escherichia coli (strain K12).